A 55-amino-acid polypeptide reads, in one-letter code: Riparin-1.4 (55 aa).

Positions 1 to 15 are cleaved as a signal peptide; that stretch reads MKIIVVLAVLMLVSA. Residues 16–41 constitute a propeptide that is removed on maturation; sequence QVCLVSAAEMGHSSDNELSSRDLVKR. Cysteine 47 and cysteine 53 are oxidised to a cystine. A propeptide spanning residues 54-55 is cleaved from the precursor; sequence NH.

Expressed by the skin glands.

It localises to the secreted. The protein is Riparin-1.4 of Crinia riparia (Streambank froglet).